The sequence spans 131 residues: D-ribose pyranase (131 aa).

His-20 acts as the Proton donor in catalysis. Residues Asp-28, His-98, and 120-122 each bind substrate; that span reads YAN.

It belongs to the RbsD / FucU family. RbsD subfamily. In terms of assembly, homodecamer.

It is found in the cytoplasm. It carries out the reaction beta-D-ribopyranose = beta-D-ribofuranose. The protein operates within carbohydrate metabolism; D-ribose degradation; D-ribose 5-phosphate from beta-D-ribopyranose: step 1/2. Its function is as follows. Catalyzes the interconversion of beta-pyran and beta-furan forms of D-ribose. In Bacillus cereus (strain ATCC 10987 / NRS 248), this protein is D-ribose pyranase.